Reading from the N-terminus, the 115-residue chain is NADH-ubiquinone oxidoreductase chain 3 (115 aa).

Helical transmembrane passes span 5–25 (LTFM…FWLP), 55–75 (FFLV…LLPL), and 86–106 (LMLT…AYEW).

This sequence belongs to the complex I subunit 3 family. In terms of assembly, core subunit of respiratory chain NADH dehydrogenase (Complex I) which is composed of 45 different subunits. Interacts with TMEM186. Interacts with TMEM242.

The protein resides in the mitochondrion inner membrane. The catalysed reaction is a ubiquinone + NADH + 5 H(+)(in) = a ubiquinol + NAD(+) + 4 H(+)(out). Core subunit of the mitochondrial membrane respiratory chain NADH dehydrogenase (Complex I) which catalyzes electron transfer from NADH through the respiratory chain, using ubiquinone as an electron acceptor. Essential for the catalytic activity of complex I. This chain is NADH-ubiquinone oxidoreductase chain 3, found in Avahi unicolor (Sambirano woolly lemur).